Reading from the N-terminus, the 364-residue chain is Chorismate synthase (364 aa).

Arginine 47 provides a ligand contact to NADP(+). FMN-binding positions include 124–126 (RGS), 240–241 (NA), glycine 284, 299–303 (KPTPS), and arginine 326.

The protein belongs to the chorismate synthase family. FMNH2 serves as cofactor.

The enzyme catalyses 5-O-(1-carboxyvinyl)-3-phosphoshikimate = chorismate + phosphate. It participates in metabolic intermediate biosynthesis; chorismate biosynthesis; chorismate from D-erythrose 4-phosphate and phosphoenolpyruvate: step 7/7. Catalyzes the anti-1,4-elimination of the C-3 phosphate and the C-6 proR hydrogen from 5-enolpyruvylshikimate-3-phosphate (EPSP) to yield chorismate, which is the branch point compound that serves as the starting substrate for the three terminal pathways of aromatic amino acid biosynthesis. This reaction introduces a second double bond into the aromatic ring system. The polypeptide is Chorismate synthase (Methanobrevibacter smithii (strain ATCC 35061 / DSM 861 / OCM 144 / PS)).